A 1396-amino-acid chain; its full sequence is ATP-dependent helicase/nuclease subunit A (1396 aa).

Residues 1–25 are disordered; that stretch reads MNREALCHDDPIGHDRLRPDSIPRD. The region spanning 26-532 is the UvrD-like helicase ATP-binding domain; that stretch reads PKWTDEQWQA…IDLAKNFRSR (507 aa). An ATP-binding site is contributed by 47 to 54; that stretch reads AAAGAGKT. Disordered stretches follow at residues 590–649 and 1171–1205; these read DADG…GQPT and HSPE…PSPD. Positions 615-920 constitute a UvrD-like helicase C-terminal domain; sequence HKNIAKAGES…RIMSIHKSKG (306 aa). Residues 1181 to 1199 are compositionally biased toward low complexity; it reads TPPSLEIPPSLETPPSLET.

The protein belongs to the helicase family. AddA subfamily. As to quaternary structure, heterodimer of AddA and AddB/RexB. Requires Mg(2+) as cofactor.

It carries out the reaction Couples ATP hydrolysis with the unwinding of duplex DNA by translocating in the 3'-5' direction.. The catalysed reaction is ATP + H2O = ADP + phosphate + H(+). In terms of biological role, the heterodimer acts as both an ATP-dependent DNA helicase and an ATP-dependent, dual-direction single-stranded exonuclease. Recognizes the chi site generating a DNA molecule suitable for the initiation of homologous recombination. The AddA nuclease domain is required for chi fragment generation; this subunit has the helicase and 3' -&gt; 5' nuclease activities. The sequence is that of ATP-dependent helicase/nuclease subunit A from Heliobacterium modesticaldum (strain ATCC 51547 / Ice1).